We begin with the raw amino-acid sequence, 122 residues long: Basic phospholipase A2 homolog (122 aa).

Intrachain disulfides connect cysteine 26–cysteine 116, cysteine 28–cysteine 44, cysteine 43–cysteine 96, cysteine 49–cysteine 122, cysteine 50–cysteine 89, cysteine 57–cysteine 82, and cysteine 75–cysteine 87. The important for membrane-damaging activities in eukaryotes and bacteria; heparin-binding stretch occupies residues 106 to 117 (KKHRVTVKFLCK).

Belongs to the phospholipase A2 family. Group II subfamily. K49 sub-subfamily. Homodimer; non-covalently linked. As to expression, expressed by the venom gland.

It is found in the secreted. In terms of biological role, snake venom phospholipase A2 (PLA2) that has almost no phospholipase A2 activity. Is myotoxic. Displays edema-inducing activities. A model of myotoxic mechanism has been proposed: an apo Lys49-PLA2 is activated by the entrance of a hydrophobic molecule (e.g. fatty acid) at the hydrophobic channel of the protein leading to a reorientation of a monomer. This reorientation causes a transition between 'inactive' to 'active' states, causing alignment of C-terminal and membrane-docking sites (MDoS) side-by-side and putting the membrane-disruption sites (MDiS) in the same plane, exposed to solvent and in a symmetric position for both monomers. The MDoS region stabilizes the toxin on membrane by the interaction of charged residues with phospholipid head groups. Subsequently, the MDiS region destabilizes the membrane with penetration of hydrophobic residues. This insertion causes a disorganization of the membrane, allowing an uncontrolled influx of ions (i.e. calcium and sodium), and eventually triggering irreversible intracellular alterations and cell death. This Protobothrops mucrosquamatus (Taiwan habu) protein is Basic phospholipase A2 homolog.